Reading from the N-terminus, the 320-residue chain is Transcription termination/antitermination protein NusG (320 aa).

This sequence belongs to the NusG family.

Participates in transcription elongation, termination and antitermination. The chain is Transcription termination/antitermination protein NusG from Mycoplasma pneumoniae (strain ATCC 29342 / M129 / Subtype 1) (Mycoplasmoides pneumoniae).